A 78-amino-acid polypeptide reads, in one-letter code: Large ribosomal subunit protein bL28 (78 aa).

This sequence belongs to the bacterial ribosomal protein bL28 family.

The sequence is that of Large ribosomal subunit protein bL28 from Synechococcus sp. (strain WH7803).